Consider the following 104-residue polypeptide: MTASTEGQARYGQSVKGLLTEKVSTCGADVIALTKQVLKGSHSSELLGQAARNMVMQEDSILHSEDSLRKMAIITTHLQYQQEAIQKNVEQSSNLQDQLKHLLK.

Belongs to the BORCS7 family.

Its subcellular location is the lysosome membrane. Functionally, as part of a BORC-like complex may play a role in lysosomes movement and localization at the cell periphery. Associated with the cytosolic face of lysosomes, this complex may couple lysosomes to microtubule plus-end-directed kinesin motor. This is BLOC-1-related complex subunit 7 from Xenopus tropicalis (Western clawed frog).